The sequence spans 371 residues: Probable dual-specificity RNA methyltransferase RlmN (371 aa).

Glu114 serves as the catalytic Proton acceptor. A Radical SAM core domain is found at 120-346 (DGPRRSICVS…ESAGVNVNFR (227 aa)). Cys127 and Cys357 are oxidised to a cystine. Residues Cys134, Cys138, and Cys141 each coordinate [4Fe-4S] cluster. S-adenosyl-L-methionine-binding positions include 183 to 184 (GE), Ser215, 238 to 240 (SLH), and Asn314. Cys357 functions as the S-methylcysteine intermediate in the catalytic mechanism.

Belongs to the radical SAM superfamily. RlmN family. [4Fe-4S] cluster is required as a cofactor.

The protein resides in the cytoplasm. The enzyme catalyses adenosine(2503) in 23S rRNA + 2 reduced [2Fe-2S]-[ferredoxin] + 2 S-adenosyl-L-methionine = 2-methyladenosine(2503) in 23S rRNA + 5'-deoxyadenosine + L-methionine + 2 oxidized [2Fe-2S]-[ferredoxin] + S-adenosyl-L-homocysteine. The catalysed reaction is adenosine(37) in tRNA + 2 reduced [2Fe-2S]-[ferredoxin] + 2 S-adenosyl-L-methionine = 2-methyladenosine(37) in tRNA + 5'-deoxyadenosine + L-methionine + 2 oxidized [2Fe-2S]-[ferredoxin] + S-adenosyl-L-homocysteine. In terms of biological role, specifically methylates position 2 of adenine 2503 in 23S rRNA and position 2 of adenine 37 in tRNAs. The polypeptide is Probable dual-specificity RNA methyltransferase RlmN (Rhodopirellula baltica (strain DSM 10527 / NCIMB 13988 / SH1)).